The primary structure comprises 352 residues: uncharacterized protein (352 aa).

N-linked (GlcNAc...) asparagine glycosylation is found at asparagine 14, asparagine 52, and asparagine 70. Residues 41–73 are disordered; the sequence is LSDYKKNKDTLNNSNNNINQPFENSNNFNNNSK. Residues 50-72 are compositionally biased toward low complexity; it reads TLNNSNNNINQPFENSNNFNNNS. The helical transmembrane segment at 131-151 threads the bilayer; that stretch reads IIFKSSGLLITLLVLYLGTFF. Residues asparagine 165, asparagine 186, asparagine 192, asparagine 193, asparagine 203, and asparagine 289 are each glycosylated (N-linked (GlcNAc...) asparagine). A compositionally biased stretch (low complexity) spans 193 to 213; it reads NSSNSNNNNINNSNNNNNNNN. Positions 193-219 are disordered; that stretch reads NSSNSNNNNINNSNNNNNNNNRILSPN.

The protein resides in the membrane. This is an uncharacterized protein from Dictyostelium discoideum (Social amoeba).